Here is a 328-residue protein sequence, read N- to C-terminus: Ferredoxin--NADP reductase 1 (328 aa).

Glutamate 37, lysine 45, tyrosine 49, valine 89, and threonine 310 together coordinate FAD.

It belongs to the ferredoxin--NADP reductase type 2 family. As to quaternary structure, homodimer. It depends on FAD as a cofactor.

It carries out the reaction 2 reduced [2Fe-2S]-[ferredoxin] + NADP(+) + H(+) = 2 oxidized [2Fe-2S]-[ferredoxin] + NADPH. The sequence is that of Ferredoxin--NADP reductase 1 from Latilactobacillus sakei subsp. sakei (strain 23K) (Lactobacillus sakei subsp. sakei).